The chain runs to 301 residues: Ribosomal RNA small subunit methyltransferase H (301 aa).

S-adenosyl-L-methionine contacts are provided by residues 35–37, Asp55, Phe84, Asp105, and Gln112; that span reads GGH.

It belongs to the methyltransferase superfamily. RsmH family.

The protein resides in the cytoplasm. The enzyme catalyses cytidine(1402) in 16S rRNA + S-adenosyl-L-methionine = N(4)-methylcytidine(1402) in 16S rRNA + S-adenosyl-L-homocysteine + H(+). Functionally, specifically methylates the N4 position of cytidine in position 1402 (C1402) of 16S rRNA. The polypeptide is Ribosomal RNA small subunit methyltransferase H (Chloroflexus aurantiacus (strain ATCC 29366 / DSM 635 / J-10-fl)).